Here is an 88-residue protein sequence, read N- to C-terminus: Large ribosomal subunit protein eL31 (88 aa).

The protein belongs to the eukaryotic ribosomal protein eL31 family.

This Archaeoglobus fulgidus (strain ATCC 49558 / DSM 4304 / JCM 9628 / NBRC 100126 / VC-16) protein is Large ribosomal subunit protein eL31 (rpl31e).